The sequence spans 540 residues: MRAMVVDMNDKYAVVVNKEGQYIKIKRKAEHRLGYQVELPDRVIGFERRTLLKVVSVAAALLIVSSISFAVYSYNLPYSYVNVDINPSLEIILNMYNRIIDVKALNSEGEMLIEDSYKNSRLDEGVEKIIDSAVAQGFLKNDEENTIMLTVAGKNSRKVLEIKEEVESTANKVLNDDNVVSEVIVENIVLERREEARELGIAPGKLLLIEKLKEVDPKATTEEYKDKPVNEIVKTIRDIKKVPNENNRKDDDKKVNNEPNKPLPDRKADVETSAGVKENTAGPDAGIKPVNKTDNAKPNVGTDINNKENKTVSNAKIDSGIDKGNKDSKPNSNTKINNDVKKDNKDNKTNSDAKTFNDVSKDNKNDKADGNAKINNNINRDNKITPINPDNKFSSGGSKDDKDNKHVDSKDKMNNEDNKNINNGSCPQYNPYWNPYWNPYWNPYWGNPKEKEDMTKQNDEWFKKMQEEQKKQYDEWLKKMQEEQKKQHDEWVKKMEEMKNTEKMKNPYQENKIEKPKEAEKENKPDRPPEPGKEILKKRC.

The 48-residue stretch at 1 to 48 folds into the RsgI N-terminal anti-sigma domain; the sequence is MRAMVVDMNDKYAVVVNKEGQYIKIKRKAEHRLGYQVELPDRVIGFER. Residues 1–50 lie on the Cytoplasmic side of the membrane; it reads MRAMVVDMNDKYAVVVNKEGQYIKIKRKAEHRLGYQVELPDRVIGFERRT. The chain crosses the membrane as a helical span at residues 51–73; sequence LLKVVSVAAALLIVSSISFAVYS. Topologically, residues 74–540 are extracellular; that stretch reads YNLPYSYVNV…PGKEILKKRC (467 aa). 5 stretches are compositionally biased toward basic and acidic residues: residues 238 to 256, 319 to 329, 338 to 351, 359 to 370, and 398 to 419; these read DIKKVPNENNRKDDDKKVN, SGIDKGNKDSK, NDVKKDNKDNKTNS, VSKDNKNDKADG, and SKDDKDNKHVDSKDKMNNEDNK. 2 disordered regions span residues 238-429 and 481-540; these read DIKK…CPQY and QEEQ…KKRC. The stretch at 451-501 forms a coiled coil; the sequence is KEDMTKQNDEWFKKMQEEQKKQYDEWLKKMQEEQKKQHDEWVKKMEEMKNT.

In terms of assembly, interacts (via RsgI N-terminal anti-sigma domain) with SigI7.

The protein resides in the cell membrane. In terms of biological role, anti-sigma factor for SigI7. Negatively regulates SigI7 activity through direct interaction. This Acetivibrio thermocellus (strain ATCC 27405 / DSM 1237 / JCM 9322 / NBRC 103400 / NCIMB 10682 / NRRL B-4536 / VPI 7372) (Clostridium thermocellum) protein is Anti-sigma-I factor RsgI7.